A 279-amino-acid polypeptide reads, in one-letter code: uncharacterized protein (279 aa).

3 stretches are compositionally biased toward low complexity: residues 1 to 25 (MNEN…NNNN), 86 to 151 (PSQS…NGNN), and 232 to 250 (NKNN…DDNN). 3 disordered regions span residues 1–27 (MNEN…NNIK), 83–153 (NLFP…NNID), and 213–260 (QSVN…KVKS).

This is an uncharacterized protein from Dictyostelium discoideum (Social amoeba).